A 441-amino-acid chain; its full sequence is Arginine biosynthesis bifunctional protein ArgJ, mitochondrial (441 aa).

Substrate is bound by residues Thr177, Lys204, Thr215, Glu301, Asn436, and Ser441. Thr215 functions as the Nucleophile in the catalytic mechanism.

Belongs to the ArgJ family. Heterodimer of an alpha and a beta chain. In terms of processing, the alpha and beta chains are autoproteolytically processed from a single precursor protein within the mitochondrion.

The protein localises to the mitochondrion matrix. The enzyme catalyses N(2)-acetyl-L-ornithine + L-glutamate = N-acetyl-L-glutamate + L-ornithine. It carries out the reaction L-glutamate + acetyl-CoA = N-acetyl-L-glutamate + CoA + H(+). It functions in the pathway amino-acid biosynthesis; L-arginine biosynthesis; L-ornithine and N-acetyl-L-glutamate from L-glutamate and N(2)-acetyl-L-ornithine (cyclic): step 1/1. Its pathway is amino-acid biosynthesis; L-arginine biosynthesis; N(2)-acetyl-L-ornithine from L-glutamate: step 1/4. Its function is as follows. Catalyzes two activities which are involved in the cyclic version of arginine biosynthesis: the synthesis of acetylglutamate from glutamate and acetyl-CoA, and of ornithine by transacetylation between acetylornithine and glutamate. The protein is Arginine biosynthesis bifunctional protein ArgJ, mitochondrial of Candida glabrata (strain ATCC 2001 / BCRC 20586 / JCM 3761 / NBRC 0622 / NRRL Y-65 / CBS 138) (Yeast).